The chain runs to 65 residues: UPF0370 protein Ent638_2968 (65 aa).

Residues 4 to 24 traverse the membrane as a helical segment; sequence LSKYWWILVLVFLVGVLLNVI. The tract at residues 39-65 is disordered; the sequence is KPELPPHRDFNDKWDDDDNWPKKDQKK. Basic and acidic residues predominate over residues 42–65; sequence LPPHRDFNDKWDDDDNWPKKDQKK.

This sequence belongs to the UPF0370 family.

It is found in the cell membrane. This chain is UPF0370 protein Ent638_2968, found in Enterobacter sp. (strain 638).